We begin with the raw amino-acid sequence, 113 residues long: MNTVRVTFLLVFVLAVSLGQADKDENRMEMQEKTEQGRSYLDFAENLLLQKLEELEAKLLEEDSEESRNSRQKRCIGEGVPCDENDPRCCSGLVCLKPTLHGIWYKSYYCYKK.

The first 21 residues, 1-21 (MNTVRVTFLLVFVLAVSLGQA), serve as a signal peptide directing secretion. A propeptide spanning residues 22-74 (DKDENRMEMQEKTEQGRSYLDFAENLLLQKLEELEAKLLEEDSEESRNSRQKR) is cleaved from the precursor. Residues 61 to 83 (EEDSEESRNSRQKRCIGEGVPCD) form a disordered region. 3 disulfide bridges follow: Cys-75–Cys-90, Cys-82–Cys-95, and Cys-89–Cys-110.

Belongs to the neurotoxin 14 (magi-1) family. 01 (HNTX-16) subfamily. In terms of tissue distribution, expressed by the venom gland.

It is found in the secreted. Probable ion channel inhibitor. The polypeptide is U11-theraphotoxin-Hhn1a (Cyriopagopus hainanus (Chinese bird spider)).